The following is a 214-amino-acid chain: Ribosomal RNA small subunit methyltransferase G (214 aa).

Residues Gly81, Met86, 132–133, and Arg147 contribute to the S-adenosyl-L-methionine site; that span reads VE.

This sequence belongs to the methyltransferase superfamily. RNA methyltransferase RsmG family.

It localises to the cytoplasm. The catalysed reaction is guanosine(527) in 16S rRNA + S-adenosyl-L-methionine = N(7)-methylguanosine(527) in 16S rRNA + S-adenosyl-L-homocysteine. In terms of biological role, specifically methylates the N7 position of guanine in position 527 of 16S rRNA. This Pseudomonas aeruginosa (strain UCBPP-PA14) protein is Ribosomal RNA small subunit methyltransferase G.